The following is a 178-amino-acid chain: Gamma-crystallin S (178 aa).

N-acetylserine is present on Ser-2. An N-terminal arm region spans residues 2–5 (SKAG). Beta/gamma crystallin 'Greek key' domains follow at residues 6-44 (TKIT…RVEG) and 45-87 (GTWA…RAVH). Positions 88 to 93 (LSSGGQ) are connecting peptide. Beta/gamma crystallin 'Greek key' domains lie at 94-134 (YKLQ…KVLE) and 135-177 (GAWI…RRIV).

It belongs to the beta/gamma-crystallin family. In terms of assembly, monomer.

In terms of biological role, crystallins are the dominant structural components of the vertebrate eye lens. The protein is Gamma-crystallin S (CRYGS) of Bos taurus (Bovine).